Consider the following 1155-residue polypeptide: MLIHPFIQSFTEIIDNRMKLGNNMEGVIECKNCQTDTPKCNKVCLTCNSDIGERCWRCNYLGKINSKFCFRCNVKLHPTSIPPKDSIQPIPIFTKHPIASTLLINKSIIPTQSENNSINDNNNNNNNNNNNNNNNNNNNNNNNNNNNNNTNNNDSKIIDATITNTKNNNTTNNNNISNNNSSNIISNSNNNNNNNNNNNNNNNNNNNNNNNLNFLKKSTSCDNGSFESISDSISPIKDIINNINNRTKDIEKLNSALPLNKKSNSSTSWSNFNTFKNNSKTNNNNNNNNNNNNNNNNNNNNNNYKPTITSSQTQPSLMENSKDIDKKEKIPSNINNNRSTTIIYKYQEDNSEDYTDDGDFEEFQINSNLTSESSSIDSLIIKDGVIATTVTSSTINCINDNNFDPDQLSSSTSSIKKPKLFYSITKKKLVSQSPPPPQPPFLASASSSSTTTITTTDSLEKSIKDSTPIATTLVNDYQNQNQNLNNESAASSSSLSTTTTTTTTTTTTTLLPDSQTNLNNLIFIEKLNNDLSGSIETLNNSLNNSLNSLNSSFNFRLNLNSITNNEDKRLSNSSLLDEIIDAFPSPPSKNPYISVLNTSGGIGSNSNSSNNNNSNSNNITNSNSSSFSKKNSNNNNNYQPVISLPIPIVNHQQQQQQQQLQTAAILGNNNINFIQNPSSTSTTTTTTTASTTTILIKSDHRTNLIKEILTTELDYVNDLETIINVFCKPLRDFISNEDSASIFSNIEQIWQINKQLYENLISNTLTIGQVFSNMSDSLKVYSVYCNYHQKSLDSLNQLLKTPQNESFFDQLLSKPELRGMGPHSFLIKPVQRICKYPLLLKELLKATAEDHFDYPQLILAVEKIEKIVGTINSQKKEMETWQRTMQLIQNLKGADNLQLLAANRHLILEGSLHLVIGFTENAEKKNSSLKFKKGVYFLFNDLFLFTKQKGTTYKLLFYTQLDNVLIHANVSNCFPADKSVFSLVEIGVGGRKWTFCNTNSNSSNISNSGNSSGIINSSSSSSGSCSNGGNSSGYNNLNNTCGIYSGNSNNNNNNNNNNNNIFSTIQKLIEKTWEDKFMGQSSVSHRLSIPSTSSPNNGASLNGNSSSNSSSTSISTVGSPNVTSAAKQQQQLQQQQQSSKKRNRRLVKSLVNIKT.

Disordered stretches follow at residues 114 to 216 (ENNS…NFLK), 259 to 333 (LNKK…IPSN), 429 to 460 (LVSQ…DSLE), 484 to 508 (LNNE…TTTT), and 604 to 639 (SNSN…NNYQ). 3 stretches are compositionally biased toward low complexity: residues 115–153 (NNSI…TNNN), 161–211 (TITN…NNNN), and 260–303 (NKKS…NNNN). A coiled-coil region spans residues 192–257 (NNNNNNNNNN…KDIEKLNSAL (66 aa)). The segment covering 304–319 (YKPTITSSQTQPSLME) has biased composition (polar residues). Positions 320-330 (NSKDIDKKEKI) are enriched in basic and acidic residues. Positions 441–457 (FLASASSSSTTTITTTD) are enriched in low complexity. Low complexity predominate over residues 604–637 (SNSNSSNNNNSNSNNITNSNSSSFSKKNSNNNNN). Residues 700–874 (HRTNLIKEIL…EKIVGTINSQ (175 aa)) enclose the DH domain. Positions 1084–1155 (SHRLSIPSTS…LVKSLVNIKT (72 aa)) are disordered. Composition is skewed to low complexity over residues 1093-1121 (SSPN…GSPN) and 1128-1137 (QQQQLQQQQQ).

Its function is as follows. GTPase-activating protein. This chain is RhoGEF domain-containing protein gxcJ (gxcJ), found in Dictyostelium discoideum (Social amoeba).